The chain runs to 145 residues: S-adenosylmethionine synthase 2 (145 aa).

Residues 6 to 7 (RK), alanine 23, lysine 27, and lysine 31 each bind ATP. Lysine 31 contacts L-methionine.

It belongs to the AdoMet synthase family. In terms of assembly, homotetramer. Mn(2+) serves as cofactor. The cofactor is Mg(2+). Co(2+) is required as a cofactor. It depends on K(+) as a cofactor. As to expression, mainly in floral buds and roots.

The protein localises to the cytoplasm. It catalyses the reaction L-methionine + ATP + H2O = S-adenosyl-L-methionine + phosphate + diphosphate. It functions in the pathway amino-acid biosynthesis; S-adenosyl-L-methionine biosynthesis; S-adenosyl-L-methionine from L-methionine: step 1/1. In terms of biological role, catalyzes the formation of S-adenosylmethionine from methionine and ATP. The reaction comprises two steps that are both catalyzed by the same enzyme: formation of S-adenosylmethionine (AdoMet) and triphosphate, and subsequent hydrolysis of the triphosphate. In Petroselinum crispum (Parsley), this protein is S-adenosylmethionine synthase 2 (SMS-2).